Here is an 813-residue protein sequence, read N- to C-terminus: MDNTVRLDQLHDEQYRRILPTLNGYFEQKDTSLSRLDPRNYRNENYKKMNAIIPVLLRAHQCHPTDWKLLFANAQTLNFYSALLEGLLMFMFQSFSTTVGFGSNMEFLRCMLKTYEYLYTVAKTLPSPELGQRVMSFQNHFMRNWNKVQCESLLFDQVKDLLSHAHDFVAPPLFNLESVIKRDYFKITCDKLRYENLCVELFHLDNGNMAIFKVNTQTLPLYTNEQTHELLLRLTRNIDMGAYQDPLFQIGRTLLFPTIRPMDLRIADESRKSILLETKTGNGVTLALTPYDTLAWSQHWRPFVQSLCAVADSPKAFLSDRNESTFGSPINKDTITSAGTRGLGISLKKSEVRTNLDTGLRKSKPLASEALSISEIESLNMKKLMELNDSTDASTMNSSMKSPVPTNIRHIQEPSNIIEQMSPVIGSRVDDIDSIISDDDGINNEGSLGGSPVFNLSAEFHKPQLTKRKSSSFLNLFKKDKSKSQKNSTDSLAKLSDTKSIHPPESAMSSHASTPSSTSKSSKSSKSSSTLSPSTCKLPSSVKLDTNNVLLDTLVKLSQWRNNSWRFFSSSWLQLQVVNSNQGRYMFVVQDDNSNLKLCIAIGERWTISRTTAQDIQIRFPPTDVVASVAEPVPTLLSVRCPQVDNIANLLKHCKKNEVILTSSNNMSNSATQLTLGSNSSSILSNNVSNMSFSRSSTASNDLSHGWSKPQVLDSSKDCKSLLLLSKIKVRLHKYDQQYGWKMTKVGLLNVYSREYNGSVAGCKFEMDDTESFISSISDLKRIGRTGISAGERLVEFKNQNVADETYKLLGAL.

A disordered region spans residues 478 to 537; sequence KKDKSKSQKNSTDSLAKLSDTKSIHPPESAMSSHASTPSSTSKSSKSSKSSSTLSPSTCK. Positions 506–537 are enriched in low complexity; that stretch reads SAMSSHASTPSSTSKSSKSSKSSSTLSPSTCK.

This sequence belongs to the UPF0508 family.

The chain is UPF0508 protein KLLA0A06237g from Kluyveromyces lactis (strain ATCC 8585 / CBS 2359 / DSM 70799 / NBRC 1267 / NRRL Y-1140 / WM37) (Yeast).